Here is a 460-residue protein sequence, read N- to C-terminus: MTNYAIILAAGKGTRMTSDLPKVLHKVSGLTMLEHGFRSGKAISPEKSVTVIGHKSKMVRGGLADQSAFVHQTEQLGTGHAVMMAETQLEGLEGHTLVIAGDTPLITGESLKSLIDFHVNHKNVATILTATAQDSFGYGRIVRNKNGEVIKIVEQKDANEYEQQLKEINTGTYVFDNKRLFEALKCITTNNAQGEYYLTDVVAIFRANKEKVGAYILRDFNESLGVNDRVALATAETVMRQRITQKHMVNGVTFHNPETVYIESDVEIAPDVLIEGNVTLKGRTHIGSGTVLTNGTYIVDSEIGQGSIITNSMIESSVLAAGVTVGPYAHLRPGTTLDREVHIGNFVEVKGSHIGEKTKAGHLTYIGNAQVGSSVNVGAGTITVNYDGQNKYETVIGDHAFIGSNSTLIAPLEIGDHALTAAGSTISKTVPIDSIAIGRSRQVTKEGYAKRLAHHPSRSK.

The segment at 1-229 (MTNYAIILAA…FNESLGVNDR (229 aa)) is pyrophosphorylase. Residues 8–11 (LAAG), Lys22, Gln72, and 77–78 (GT) each bind UDP-N-acetyl-alpha-D-glucosamine. Asp102 is a Mg(2+) binding site. Residues Gly139, Glu154, Asn169, and Asn227 each contribute to the UDP-N-acetyl-alpha-D-glucosamine site. A Mg(2+)-binding site is contributed by Asn227. Positions 230–250 (VALATAETVMRQRITQKHMVN) are linker. The tract at residues 251-460 (GVTFHNPETV…RLAHHPSRSK (210 aa)) is N-acetyltransferase. 2 residues coordinate UDP-N-acetyl-alpha-D-glucosamine: Arg332 and Lys350. His362 functions as the Proton acceptor in the catalytic mechanism. The UDP-N-acetyl-alpha-D-glucosamine site is built by Tyr365 and Asn376. Residues Ala379, 385-386 (NY), Ser404, Ala422, and Arg439 contribute to the acetyl-CoA site.

It in the N-terminal section; belongs to the N-acetylglucosamine-1-phosphate uridyltransferase family. This sequence in the C-terminal section; belongs to the transferase hexapeptide repeat family. As to quaternary structure, homotrimer. Mg(2+) is required as a cofactor.

It localises to the cytoplasm. The enzyme catalyses alpha-D-glucosamine 1-phosphate + acetyl-CoA = N-acetyl-alpha-D-glucosamine 1-phosphate + CoA + H(+). It carries out the reaction N-acetyl-alpha-D-glucosamine 1-phosphate + UTP + H(+) = UDP-N-acetyl-alpha-D-glucosamine + diphosphate. It functions in the pathway nucleotide-sugar biosynthesis; UDP-N-acetyl-alpha-D-glucosamine biosynthesis; N-acetyl-alpha-D-glucosamine 1-phosphate from alpha-D-glucosamine 6-phosphate (route II): step 2/2. The protein operates within nucleotide-sugar biosynthesis; UDP-N-acetyl-alpha-D-glucosamine biosynthesis; UDP-N-acetyl-alpha-D-glucosamine from N-acetyl-alpha-D-glucosamine 1-phosphate: step 1/1. Its pathway is bacterial outer membrane biogenesis; LPS lipid A biosynthesis. Its function is as follows. Catalyzes the last two sequential reactions in the de novo biosynthetic pathway for UDP-N-acetylglucosamine (UDP-GlcNAc). The C-terminal domain catalyzes the transfer of acetyl group from acetyl coenzyme A to glucosamine-1-phosphate (GlcN-1-P) to produce N-acetylglucosamine-1-phosphate (GlcNAc-1-P), which is converted into UDP-GlcNAc by the transfer of uridine 5-monophosphate (from uridine 5-triphosphate), a reaction catalyzed by the N-terminal domain. This is Bifunctional protein GlmU from Streptococcus pyogenes serotype M49 (strain NZ131).